The following is a 559-amino-acid chain: Aminopeptidase Q (559 aa).

Over 1-13 the chain is Cytoplasmic; the sequence is MSRPFSSGVYVSR. The helical; Signal-anchor for type II membrane protein transmembrane segment at 14–34 threads the bilayer; it reads GVALLLAALTAVLLLVLVALA. Residues 35 to 559 lie on the Lumenal side of the membrane; that stretch reads SLYGSCAHVQ…VPFRHFLAEH (525 aa). N-linked (GlcNAc...) asparagine glycosylation is found at Asn-121 and Asn-129. Glu-237 is a substrate binding site. N-linked (GlcNAc...) asparagine glycans are attached at residues Asn-258, Asn-285, and Asn-343. 376–380 contributes to the substrate binding site; the sequence is GAMEN. His-412 serves as a coordination point for Zn(2+). Glu-413 serves as the catalytic Proton acceptor. The Zn(2+) site is built by His-416 and Glu-435.

This sequence belongs to the peptidase M1 family. Homodimer. The cofactor is Zn(2+). N-glycosylated.

Its subcellular location is the membrane. With respect to regulation, inhibited by bestatin. Its function is as follows. Metalloprotease which may be important for placentation by regulating biological activity of key peptides at the embryo-maternal interface. On synthetic substrates it shows a marked preference for Leu-4-methylcoumaryl-7-amide (Leu-MCA) over Met-MCA, Arg-LCA and Lys-LCA. Cleaves the N-terminal amino acid of several peptides such as angiotensin-3, kisspeptin-10 and endokinin C. The polypeptide is Aminopeptidase Q (Mus musculus (Mouse)).